The primary structure comprises 284 residues: Tropomyosin (284 aa).

Positions 1-284 form a coiled coil; sequence MEAIKNKMQA…DQTFAELTGY (284 aa).

Belongs to the tropomyosin family. Homodimer.

In terms of biological role, tropomyosin, in association with the troponin complex, plays a central role in the calcium dependent regulation of muscle contraction. This chain is Tropomyosin, found in Dermatophagoides pteronyssinus (European house dust mite).